Consider the following 155-residue polypeptide: Large ribosomal subunit protein uL16m (155 aa).

The protein belongs to the universal ribosomal protein uL16 family.

Its subcellular location is the mitochondrion. The protein is Large ribosomal subunit protein uL16m (RPL16) of Petunia hybrida (Petunia).